A 136-amino-acid chain; its full sequence is Large ribosomal subunit protein bL17 (136 aa).

This sequence belongs to the bacterial ribosomal protein bL17 family. In terms of assembly, part of the 50S ribosomal subunit. Contacts protein L32.

In Rhodopseudomonas palustris (strain BisB5), this protein is Large ribosomal subunit protein bL17.